A 248-amino-acid polypeptide reads, in one-letter code: Clathrin light chain A (248 aa).

Positions 1–92 (MAELDPFGAP…YYQESNGPTD (92 aa)) are disordered. Positions 13 to 25 (APGGPALGNGVAG) are enriched in gly residues. Positions 61–71 (GPQPHGEPPGG) are enriched in pro residues. The segment at 100–162 (VDRLQSEPES…QLQKTKANNR (63 aa)) is involved in binding clathrin heavy chain. 2 positions are modified to phosphoserine: serine 105 and serine 206. Lysine 223 carries the N6-acetyllysine modification. Phosphoserine is present on serine 236. Lysine 242 carries the N6-acetyllysine modification.

The protein belongs to the clathrin light chain family. Clathrin coats are formed from molecules containing 3 heavy chains and 3 light chains. Interacts with CALY; the interaction stimulates clathrin self-assembly and clathrin-mediated endocytosis. Interacts with CKAP5 and TACC3 forming the TACC3/ch-TOG/clathrin complex located at spindle inter-microtubules bridges; the complex implicates clathrin triskelions.

It localises to the cytoplasmic vesicle membrane. Its subcellular location is the membrane. It is found in the coated pit. The protein resides in the cytoplasm. The protein localises to the cytoskeleton. It localises to the spindle. In terms of biological role, clathrin is the major protein of the polyhedral coat of coated pits and vesicles. Acts as a component of the TACC3/ch-TOG/clathrin complex proposed to contribute to stabilization of kinetochore fibers of the mitotic spindle by acting as inter-microtubule bridge. The polypeptide is Clathrin light chain A (CLTA) (Homo sapiens (Human)).